An 810-amino-acid chain; its full sequence is Lon protease (810 aa).

Residues 32-226 (LPAIAMRSNM…RILDILARET (195 aa)) form the Lon N-terminal domain. 376–383 (GPPGVGKT) is a binding site for ATP. Residues 612 to 791 (KPMIGVTTGL…EEVLEVALNE (180 aa)) enclose the Lon proteolytic domain. Catalysis depends on residues serine 697 and lysine 740.

Belongs to the peptidase S16 family. In terms of assembly, homohexamer. Organized in a ring with a central cavity.

It localises to the cytoplasm. The catalysed reaction is Hydrolysis of proteins in presence of ATP.. ATP-dependent serine protease that mediates the selective degradation of mutant and abnormal proteins as well as certain short-lived regulatory proteins. Required for cellular homeostasis and for survival from DNA damage and developmental changes induced by stress. Degrades polypeptides processively to yield small peptide fragments that are 5 to 10 amino acids long. Binds to DNA in a double-stranded, site-specific manner. The sequence is that of Lon protease from Fervidobacterium nodosum (strain ATCC 35602 / DSM 5306 / Rt17-B1).